We begin with the raw amino-acid sequence, 358 residues long: Starch-binding domain-containing protein 1 (358 aa).

The Extracellular segment spans residues M1–S6. Residues A7–L23 form a helical membrane-spanning segment. Residues R24–H358 lie on the Cytoplasmic side of the membrane. Positions T30 to A42 are enriched in basic and acidic residues. Disordered stretches follow at residues T30 to V70 and S104 to G151. A compositionally biased stretch (low complexity) spans P50 to G66. S65 carries the phosphoserine modification. The segment covering E106–V115 has biased composition (basic and acidic residues). S117 is modified (phosphoserine). Residues P126–V140 are compositionally biased toward polar residues. Phosphoserine occurs at positions 148, 175, 188, and 194. An LIR motif is present at residues H200 to V206. Phosphoserine occurs at positions 210, 211, and 220. Residues P258 to I357 form the CBM20 domain.

As to quaternary structure, interacts with the ATG8 family proteins GABARAP and GABARAPL1. Interacts with several glycogen-associated proteins, such as GYS2 (liver glycogen synthase), GDE (glycogen debranching enzyme), GBE1 (glycogen branching enzyme 1) and EPM2A (Laforin). In terms of processing, ubiquitinated, which leads to proteasomal degradation. In terms of tissue distribution, expressed at high level in skeletal and cardiac muscles. Moderately expressed in liver and placenta. No expression is found in pancreas, kidney or lung. Present in skeletal muscle, heart and placenta (at protein level).

It localises to the preautophagosomal structure membrane. Its subcellular location is the endoplasmic reticulum membrane. The protein resides in the cell membrane. The protein localises to the sarcolemma. It is found in the T-tubule. In terms of biological role, acts as a cargo receptor for glycogen. Delivers its cargo to an autophagic pathway called glycophagy, resulting in the transport of glycogen to lysosomes. This is Starch-binding domain-containing protein 1 from Homo sapiens (Human).